The primary structure comprises 887 residues: Lateral signaling target protein 2 homolog (887 aa).

Residue Lys87 forms a Glycyl lysine isopeptide (Lys-Gly) (interchain with G-Cter in ubiquitin) linkage. The segment at 308-327 is disordered; sequence PALSAPLPPEGPLSAKAKDP. At Ser334 the chain carries Phosphoserine. Disordered stretches follow at residues 354-396 and 412-474; these read DEMS…GSDE and ALAR…ASLA. Thr516 is subject to Phosphothreonine. Ser586 is subject to Phosphoserine; by MAP2K. Residues 599–714 are disordered; sequence LAKASDRAPE…THAAPQATRE (116 aa). Residues 602-612 show a composition bias toward basic and acidic residues; that stretch reads ASDRAPERQEE. Residues 638–648 are compositionally biased toward polar residues; that stretch reads TSGSQVDTASG. Composition is skewed to low complexity over residues 681–693 and 700–711; these read SGSSSSTAGSCSS and AAPAATHAAPQA. An FYVE-type zinc finger spans residues 817–879; the sequence is DEACGFCTAC…THCYMFHVTP (63 aa). Residues Cys823, Cys826, Cys839, Cys842, Cys847, Cys850, and Cys869 each coordinate Zn(2+). A Phosphothreonine; by MAP2K modification is found at Thr870. Residue Cys872 coordinates Zn(2+).

This sequence belongs to the lst-2 family. Interacts with TRIM3. Post-translationally, monoubiquitination at Lys-87 prevents binding to phosphatidylinositol 3-phosphate (PI3P) and localization to early endosome membranes.

The protein resides in the cytoplasm. It is found in the cytosol. It localises to the early endosome membrane. In terms of biological role, negative regulator of epidermal growth factor receptor (EGFR) signaling. Acts by promoting EGFR degradation in endosomes when not monoubiquitinated. The sequence is that of Lateral signaling target protein 2 homolog (ZFYVE28) from Homo sapiens (Human).